We begin with the raw amino-acid sequence, 365 residues long: Carboxynorspermidine/carboxyspermidine decarboxylase (365 aa).

An N6-(pyridoxal phosphate)lysine modification is found at lysine 37. The substrate site is built by glutamate 233 and aspartate 269.

Belongs to the Orn/Lys/Arg decarboxylase class-II family. NspC subfamily. As to quaternary structure, homodimer. The cofactor is pyridoxal 5'-phosphate.

The protein localises to the cytoplasm. It catalyses the reaction carboxynorspermidine + H(+) = norspermidine + CO2. The catalysed reaction is carboxyspermidine + H(+) = spermidine + CO2. In terms of biological role, catalyzes the decarboxylation of carboxynorspermidine and carboxyspermidine. In Herminiimonas arsenicoxydans, this protein is Carboxynorspermidine/carboxyspermidine decarboxylase.